The following is a 1408-amino-acid chain: Protein patched homolog 1 (1408 aa).

The segment at 1–20 is disordered; sequence MLTLLEPPGAKRSPTVGNYN. Topologically, residues 1–136 are cytoplasmic; the sequence is MLTLLEPPGA…GNTVHRNAWS (136 aa). A helical transmembrane segment spans residues 137-157; sequence IILAVSMIFAVCCYGLQYVHI. Residues 158 to 649 lie on the Extracellular side of the membrane; sequence ETDIVKLWVA…STSIADMLEE (492 aa). The segment at 455–479 is disordered; that stretch reads STAPIPTTTTLSPEEARAAEEKEKK. Positions 468–479 are enriched in basic and acidic residues; the sequence is EEARAAEEKEKK. N-linked (GlcNAc...) asparagine glycosylation occurs at N599. The chain crosses the membrane as a helical span at residues 650–670; the sequence is FCQFNYTIILAGYALMLAYAI. An SSD domain is found at 654 to 816; that stretch reads NYTIILAGYA…LTIYPAIISI (163 aa). Topologically, residues 671–686 are cytoplasmic; the sequence is VTQARFDNCLPATESS. The helical transmembrane segment at 687–707 threads the bilayer; the sequence is MGLALAGVLVVTFASVAGLGL. The Extracellular segment spans residues 708 to 709; sequence AT. The helical transmembrane segment at 710-730 threads the bilayer; it reads WFGIEFNAATTQIVPFLTLGI. The Cytoplasmic portion of the chain corresponds to 731–765; sequence GVDNMFMLLHNYRDVVKLAGGHAEMAILMRETGMS. A helical membrane pass occupies residues 766–786; that stretch reads ILCTSINNILSFLTGTLLPIP. Residues 787 to 795 are Extracellular-facing; it reads ALRSFCAQS. A helical membrane pass occupies residues 796–816; the sequence is SILLTFNFIAILTIYPAIISI. The Cytoplasmic segment spans residues 817–901; that stretch reads DLRRKKAQRR…YYYIPFISKP (85 aa). The chain crosses the membrane as a helical span at residues 902 to 922; sequence ASKVAIIVGCCALLGASFIGM. Over 923-1175 the chain is Extracellular; it reads RQSTLGLELG…QGIAFTFWEQ (253 aa). 2 N-linked (GlcNAc...) asparagine glycosylation sites follow: N1026 and N1036. The chain crosses the membrane as a helical span at residues 1176–1196; that stretch reads YLFLTGNLMQAISIITISVFC. At 1197-1217 the chain is on the cytoplasmic side; it reads VISVLLFNPWAALMVVCILGI. 2 helical membrane passes run 1218–1238 and 1239–1259; these read MTCELAGFMGLVGIKLNPVSA and VTLITAVGIGVEFTVHVVVSF. At 1260-1276 the chain is on the extracellular side; that stretch reads LTALGTRSQRTSSAVDR. Residues 1277–1297 form a helical membrane-spanning segment; that stretch reads VFVPVIHGSFSTLLGILMLGF. The Cytoplasmic portion of the chain corresponds to 1298 to 1305; that stretch reads SEFEFVVK. The helical transmembrane segment at 1306–1326 threads the bilayer; it reads YFFIVMTALICIGIINGLILL. Over 1327 to 1408 the chain is Extracellular; sequence PVLLSWFGPR…GNNTRRLPAV (82 aa). The disordered stretch occupies residues 1342–1408; that stretch reads TGGKTTLTLP…GNNTRRLPAV (67 aa). Positions 1387–1408 are enriched in low complexity; the sequence is TTRTSGGNRGTVGNNTRRLPAV.

This sequence belongs to the patched family. Germ line and its progenitors.

The protein localises to the membrane. Functionally, required but not essential for cytokinesis of mitotically proliferating germ cells. This Caenorhabditis elegans protein is Protein patched homolog 1 (ptc-1).